The following is a 185-amino-acid chain: ATP synthase subunit b (185 aa).

A helical membrane pass occupies residues 27-47; it reads GALIWKGLNILAFLGIVYYFG.

The protein belongs to the ATPase B chain family. In terms of assembly, F-type ATPases have 2 components, F(1) - the catalytic core - and F(0) - the membrane proton channel. F(1) has five subunits: alpha(3), beta(3), gamma(1), delta(1), epsilon(1). F(0) has three main subunits: a(1), b(2) and c(10-14). The alpha and beta chains form an alternating ring which encloses part of the gamma chain. F(1) is attached to F(0) by a central stalk formed by the gamma and epsilon chains, while a peripheral stalk is formed by the delta and b chains.

Its subcellular location is the cell inner membrane. F(1)F(0) ATP synthase produces ATP from ADP in the presence of a proton or sodium gradient. F-type ATPases consist of two structural domains, F(1) containing the extramembraneous catalytic core and F(0) containing the membrane proton channel, linked together by a central stalk and a peripheral stalk. During catalysis, ATP synthesis in the catalytic domain of F(1) is coupled via a rotary mechanism of the central stalk subunits to proton translocation. In terms of biological role, component of the F(0) channel, it forms part of the peripheral stalk, linking F(1) to F(0). The sequence is that of ATP synthase subunit b from Aquifex aeolicus (strain VF5).